The chain runs to 368 residues: Single-stranded DNA-binding protein 3 (368 aa).

Residues 16 to 48 enclose the LisH domain; the sequence is AREKLALYVYEYLLHVGAQKSAQTFLSEIRWEK. The interval 100–368 is disordered; sequence PVLGNIPPND…NYSPSMTMSV (269 aa). Pro residues predominate over residues 126 to 139; it reads GSQPSPHAQPPPHN. Composition is skewed to low complexity over residues 174-189, 211-220, and 230-248; these read PNMG…PRGM, GPGMPGINMG, and PSSA…TYVG. A compositionally biased stretch (pro residues) spans 252–262; that stretch reads GGGPPGTPIMP. The segment covering 265–276 has biased composition (polar residues); the sequence is ADSTNSSDNIYT. The span at 295–305 shows a compositional bias: gly residues; sequence GSDGPMGGMGG. Positions 326–337 are enriched in low complexity; it reads NSPNNISGISNP. A compositionally biased stretch (polar residues) spans 353–368; it reads HSFQNDNYSPSMTMSV.

In terms of tissue distribution, expressed in embryonic fibroblasts and chondrocytes.

It is found in the nucleus. Functionally, may be involved in transcription regulation of the alpha 2(I) collagen gene where it binds to the single-stranded polypyrimidine sequences in the promoter region. The chain is Single-stranded DNA-binding protein 3 (SSBP3) from Gallus gallus (Chicken).